The sequence spans 321 residues: MVLTPTKDGPDQESMPLPADNGESPSKQQAPVNRDEMHYLDLLRHIIANGEQRMDRTEVGTLSVFGSQMRFDMRNSFPLLTTKRVFFRAVAEELLWFVAGKTDAKLLQAKNVHIWDGNSSREFLDKMGFTGRAVGDLGPVYGFQWRHFGAQYGTCDDDYSGKGIDQLRQVIDTIRNNPSDRRIIMSAWNPLDIPKMALPPCHCLAQFYVSEKRGELSCQLYQRSADMGLGVPFNIASYALLTHMIAHVTGLKPGDFVHTMGDTHVYLNHVEPLKEQLERTPRPFPKLIIKRQVQDIEDFRFEDFQIVDYNPHPKIQMDMAV.

Residues 1 to 32 are disordered; it reads MVLTPTKDGPDQESMPLPADNGESPSKQQAPV. 2 positions are modified to phosphoserine: S24 and S26. The residue at position 39 (Y39) is a Phosphotyrosine. DUMP contacts are provided by residues R56 and 181–182; that span reads RR. C201 serves as the catalytic Nucleophile. Y208 carries the phosphotyrosine modification. S210 is modified (phosphoserine). Residues 223-226, N234, and 264-266 contribute to the dUMP site; these read RSAD and HVY. Residue D226 participates in (6R)-5,10-methylene-5,6,7,8-tetrahydrofolate binding. Residue A320 participates in (6R)-5,10-methylene-5,6,7,8-tetrahydrofolate binding.

Belongs to the thymidylate synthase family. In terms of assembly, homodimer.

The catalysed reaction is dUMP + (6R)-5,10-methylene-5,6,7,8-tetrahydrofolate = 7,8-dihydrofolate + dTMP. It functions in the pathway pyrimidine metabolism; dTTP biosynthesis. The sequence is that of Thymidylate synthase (Ts) from Drosophila melanogaster (Fruit fly).